The sequence spans 62 residues: Teretoxin Tsu1.1 (62 aa).

Positions 1–21 are cleaved as a signal peptide; it reads MSCFPVLFVMMLLASQSVWAF. Positions 22–40 are excised as a propeptide; sequence PEPETRIGTARDAESMGVR.

This sequence belongs to the teretoxin A (TA) superfamily. In terms of processing, contains 2 disulfide bonds. As to expression, expressed by the venom duct.

It localises to the secreted. This Terebra subulata (Chocolate spotted auger) protein is Teretoxin Tsu1.1.